The primary structure comprises 446 residues: MDSRQYAENIAKKAKNTVRKLSSLTTKTKNDALLRTAELLLERKSQIIEENKKDLELAEKKGYSKALLDRLALDDKRINQMVQVLKDVAALPDPVGEIINMWTRPNGLKVGQMRVPLGVILIIYEARPNVTIEAASLCMKSSNAVILKGGSETINSNRILVDIIKQACRETCFPEEAVQFVDTTDREVVNHLLKLEGLIDVAIPRGGESLIRAVAENSKIPVIKHYKGVCNLYVDDEADMEKALNIAYNAKVQRPSVCNAIENLVVHKKIADKFLPEIAYYFGKAGVEMRCDEYSYNLLINHPKAKDTEIVPAKEEDYYEEFLDLIIAVKVVDSLDEAIDFIEKYGSHHSDAIVTENYTKGMKFIQDVDSAAVYINASTRFTDGNEFGLGAEMGISTDKIHARGPMALKELTIPKFIVFGNGQLRENVGIPKDESEIKIDTNACSL.

It belongs to the gamma-glutamyl phosphate reductase family.

It is found in the cytoplasm. It catalyses the reaction L-glutamate 5-semialdehyde + phosphate + NADP(+) = L-glutamyl 5-phosphate + NADPH + H(+). It functions in the pathway amino-acid biosynthesis; L-proline biosynthesis; L-glutamate 5-semialdehyde from L-glutamate: step 2/2. Its function is as follows. Catalyzes the NADPH-dependent reduction of L-glutamate 5-phosphate into L-glutamate 5-semialdehyde and phosphate. The product spontaneously undergoes cyclization to form 1-pyrroline-5-carboxylate. The sequence is that of Gamma-glutamyl phosphate reductase from Sulfurihydrogenibium sp. (strain YO3AOP1).